An 815-amino-acid polypeptide reads, in one-letter code: Protein pygopus (815 aa).

Disordered stretches follow at residues M1–A107 and G147–G711. The short motif at P39–T45 is the Nuclear localization signal element. The segment covering S46–A73 has biased composition (low complexity). Residues P74–M86 show a composition bias toward pro residues. Positions R188 to G199 are enriched in low complexity. Gly residues-rich tracts occupy residues P230–G248 and G257–N269. Residues L307–G316 are compositionally biased toward pro residues. 4 stretches are compositionally biased toward low complexity: residues G323–M341, S407–P424, P444–S478, and G495–H545. The span at P569–P580 shows a compositional bias: pro residues. A compositionally biased stretch (gly residues) spans G602–P621. Positions N622–H636 are enriched in low complexity. The span at G640–N656 shows a compositional bias: gly residues. Residues M663–N675 are compositionally biased toward basic residues. Over residues G678–G711 the composition is skewed to gly residues. The segment at I747–S805 adopts a PHD-type zinc-finger fold.

As to quaternary structure, binds to BCL9 via the PHD-type zinc finger motif, and thereby becomes part of the nuclear ARM/PAN complex. Ubiquitous throughout embryogenesis and larval development.

It localises to the nucleus. Its function is as follows. Involved in signal transduction through the Wnt pathway. The sequence is that of Protein pygopus (pygo) from Drosophila melanogaster (Fruit fly).